The sequence spans 141 residues: Histone H2B (141 aa).

The segment covering 1 to 10 (MAPKAAEKKP) has biased composition (basic and acidic residues). Residues 1–49 (MAPKAAEKKPSTGGKAPAGGKAPAEKKEAGKKTAAAASGDKKKRGKTRK) form a disordered region. N6-acetyllysine; alternate is present on residues Lys8 and Lys9. Residues Lys8 and Lys9 each participate in a glycyl lysine isopeptide (Lys-Gly) (interchain with G-Cter in SUMO); alternate cross-link. Residues 11–22 (STGGKAPAGGKA) show a composition bias toward low complexity. At Lys15 the chain carries N6-acetyllysine. Lys26 is subject to N6-acetyllysine; alternate. Lys26 participates in a covalent cross-link: Glycyl lysine isopeptide (Lys-Gly) (interchain with G-Cter in SUMO); alternate. Lys27 participates in a covalent cross-link: Glycyl lysine isopeptide (Lys-Gly) (interchain with G-Cter in SUMO). A Glycyl lysine isopeptide (Lys-Gly) (interchain with G-Cter in ubiquitin) cross-link involves residue Lys135.

Belongs to the histone H2B family. As to quaternary structure, the nucleosome is a histone octamer containing two molecules each of H2A, H2B, H3 and H4 assembled in one H3-H4 heterotetramer and two H2A-H2B heterodimers. The octamer wraps approximately 147 bp of DNA. In terms of processing, monoubiquitinated by the ubc2-bre1 complex to form H2BK123ub1. H2BK123ub1 gives a specific tag for epigenetic transcriptional activation and is also prerequisite for H3K4me and H3K79me formation. H2BK123ub1 also modulates the formation of double-strand breaks during meiosis and is a prerequisite for DNA-damage checkpoint activation. Acetylated by gcn5 to form H2BK11ac and H2BK16ac. H2BK16ac can also be formed by esa1. Acetylation of N-terminal lysines and particularly formation of H2BK11acK16ac has a positive effect on transcription. Post-translationally, sumoylation to form H2BK6su or H2BK7su, and probably also H2BK16su or H2BK17su, occurs preferentially near the telomeres and represses gene transcription.

The protein localises to the nucleus. Its subcellular location is the chromosome. Its function is as follows. Core component of nucleosome. Nucleosomes wrap and compact DNA into chromatin, limiting DNA accessibility to the cellular machineries which require DNA as a template. Histones thereby play a central role in transcription regulation, DNA repair, DNA replication and chromosomal stability. DNA accessibility is regulated via a complex set of post-translational modifications of histones, also called histone code, and nucleosome remodeling. The chain is Histone H2B (htb1) from Aspergillus oryzae (strain ATCC 42149 / RIB 40) (Yellow koji mold).